Consider the following 314-residue polypeptide: Fumarylacetoacetate hydrolase domain-containing protein 2 (314 aa).

A divalent metal cation-binding residues include E159, E161, and D190. An N6-acetyllysine; alternate modification is found at K203. At K203 the chain carries N6-succinyllysine; alternate. Residue K234 is modified to N6-acetyllysine.

The protein belongs to the FAH family. It depends on Ca(2+) as a cofactor. Requires Mg(2+) as cofactor.

Its function is as follows. May have hydrolase activity. The chain is Fumarylacetoacetate hydrolase domain-containing protein 2 (FAHD2) from Pongo abelii (Sumatran orangutan).